A 61-amino-acid chain; its full sequence is Small ribosomal subunit protein uS14 (61 aa).

Positions 24, 27, 40, and 43 each coordinate Zn(2+).

This sequence belongs to the universal ribosomal protein uS14 family. Zinc-binding uS14 subfamily. As to quaternary structure, part of the 30S ribosomal subunit. Contacts proteins S3 and S10. Zn(2+) is required as a cofactor.

Its function is as follows. Binds 16S rRNA, required for the assembly of 30S particles and may also be responsible for determining the conformation of the 16S rRNA at the A site. In Pelobacter propionicus (strain DSM 2379 / NBRC 103807 / OttBd1), this protein is Small ribosomal subunit protein uS14.